Here is a 397-residue protein sequence, read N- to C-terminus: Phosphoglycerate kinase (397 aa).

Substrate contacts are provided by residues Asp23–Asn25, Arg38, His61–Lys64, Arg122, and Arg155. ATP contacts are provided by residues Lys206, Gly296, Glu327, and Gly353–Ser356.

Belongs to the phosphoglycerate kinase family. Monomer.

The protein resides in the cytoplasm. It carries out the reaction (2R)-3-phosphoglycerate + ATP = (2R)-3-phospho-glyceroyl phosphate + ADP. It participates in carbohydrate degradation; glycolysis; pyruvate from D-glyceraldehyde 3-phosphate: step 2/5. The polypeptide is Phosphoglycerate kinase (Clostridium perfringens (strain SM101 / Type A)).